The primary structure comprises 131 residues: F(420)H(2) dehydrogenase subunit O (131 aa).

The [2Fe-2S] cluster site is built by cysteine 58, cysteine 63, and cysteine 66.

It belongs to the FpoO family. As to quaternary structure, the FPO complex is composed of at least 13 different subunits. Requires [2Fe-2S] cluster as cofactor.

The enzyme catalyses methanophenazine + reduced coenzyme F420-(gamma-L-Glu)(n) = dihydromethanophenazine + oxidized coenzyme F420-(gamma-L-Glu)(n) + H(+). Functionally, component of the F(420)H(2) dehydrogenase (FPO complex) which is part of the energy-conserving F(420)H(2):heterodisulfide oxidoreductase system. The membrane-bound electron transfer system of the complex plays an important role in the metabolism of methylotrophic methanogens when the organisms grow on methanol or methylamines. Catalyzes the oxidation of methanophenazine to dihydromethanophenazine. It shuttles electrons from F(420)H(2), via FAD and iron-sulfur (Fe-S) centers, to methanophenazine (an electron carrier in the membrane). It couples the redox reaction to proton translocation (for every two electrons transferred, two hydrogen ions are translocated across the cytoplasmic membrane), and thus conserves the redox energy in a proton gradient. It also catalyzes the oxidation of F(420)H(2) with quinones such as 2,3-dimethyl-1,4-naphthoquinone, 2-methyl-1,4-naphthoquinone and tetramethyl-p-benzoquinone. The protein is F(420)H(2) dehydrogenase subunit O (fpoO) of Methanosarcina mazei (strain ATCC BAA-159 / DSM 3647 / Goe1 / Go1 / JCM 11833 / OCM 88) (Methanosarcina frisia).